A 427-amino-acid polypeptide reads, in one-letter code: UPF0229 protein YeaH (427 aa).

Residues 79 to 90 show a composition bias toward basic and acidic residues; sequence NDHFVQNDRIER. Residues 79–110 form a disordered region; sequence NDHFVQNDRIERPQGGGGGSGSGQGQASQDGE. The segment covering 92–102 has biased composition (gly residues); it reads QGGGGGSGSGQ.

The protein belongs to the UPF0229 family.

This chain is UPF0229 protein YeaH, found in Escherichia coli (strain K12 / MC4100 / BW2952).